The following is a 101-amino-acid chain: Phosphoribosyl-AMP cyclohydrolase (101 aa).

Residue D71 coordinates Mg(2+). A Zn(2+)-binding site is contributed by C72. Mg(2+)-binding residues include D73 and D75. Residues C88 and C95 each coordinate Zn(2+).

This sequence belongs to the PRA-CH family. Homodimer. Mg(2+) is required as a cofactor. Zn(2+) serves as cofactor.

It localises to the cytoplasm. It catalyses the reaction 1-(5-phospho-beta-D-ribosyl)-5'-AMP + H2O = 1-(5-phospho-beta-D-ribosyl)-5-[(5-phospho-beta-D-ribosylamino)methylideneamino]imidazole-4-carboxamide. Its pathway is amino-acid biosynthesis; L-histidine biosynthesis; L-histidine from 5-phospho-alpha-D-ribose 1-diphosphate: step 3/9. Catalyzes the hydrolysis of the adenine ring of phosphoribosyl-AMP. This Bacillus cytotoxicus (strain DSM 22905 / CIP 110041 / 391-98 / NVH 391-98) protein is Phosphoribosyl-AMP cyclohydrolase.